Consider the following 1273-residue polypeptide: Cullin-associated NEDD8-dissociated protein 2 (1273 aa).

S2 is subject to N-acetylserine. HEAT repeat units follow at residues 2-36, 37-74, 82-119, 121-157, 167-205, 209-246, 248-284, 292-329, 364-405, 409-446, 469-506, 554-591, 602-641, 685-722, 727-764, 768-807, 809-850, 894-931, 933-968, 970-1003, 1004-1040, 1044-1081, 1085-1121, 1142-1178, 1194-1231, and 1241-1273; these read STGA…LDPL, PWLQ…ELQK, DSER…KVKE, QVEN…ELPP, SVCR…RLGA, TFHA…ACST, LFVE…SVGR, AHLD…KCPK, TEDS…SRPD, DFHC…HTRP, AQVP…VLPG, PHLP…TLWP, PYVG…HLGD, PILA…SQGL, PAVR…TQPA, EVSG…TRPP, VEYS…ALSA, GPQR…GNLP, FLPF…DNLK, YVED…LVFV, NPPF…DQPH, PLLK…NKPS, DLLD…DDGL, LDIC…LCPA, TCTA…NPEV, and STQI…MELS. The tract at residues 352–383 is disordered; the sequence is YNHDSDEEEQMETEDSEFSEQESEDEYSDDDD. A compositionally biased stretch (acidic residues) spans 356 to 383; the sequence is SDEEEQMETEDSEFSEQESEDEYSDDDD.

Belongs to the CAND family. As to quaternary structure, binds TBP, CNOT3 and UBE3C. Post-translationally, ubiquitinated and targeted for proteasomal degradation. As to expression, detected in heart and skeletal muscle.

It is found in the nucleus. Its function is as follows. Probable assembly factor of SCF (SKP1-CUL1-F-box protein) E3 ubiquitin ligase complexes that promotes the exchange of the substrate-recognition F-box subunit in SCF complexes, thereby playing a key role in the cellular repertoire of SCF complexes. This Rattus norvegicus (Rat) protein is Cullin-associated NEDD8-dissociated protein 2 (Cand2).